Here is a 3072-residue protein sequence, read N- to C-terminus: MFFKRQKGQYHEVERVTRFKLIKSGKHWLRAATSQFGLLRLMKGSDVSSTEVKVVEEQSVEKSGLNYLKGIIATGAVLGGAVVTSSSVYAEEEQAHEKVIDTRDVLATRGEAVLSEEAATTLSSTEANPVESLSDTLSASESTSASSSVSTSISVSESFSVSGSLSYSTSLSQSVSASASASESLSVSSSASDSVSASTSTSASASQSVSASQKSTISTSESTRSESSQQSTEASSQTGRRRTRRAVTESAPNVEYHDVKGDMIQSVTTSFDDTSRLLTWTINLTPRQVKSNLGALVSISGNQETRTVTINGKNAANGGVYNSGGAWNLYTGESVNNNVLRITTQVNDTGGEVKLGLRLVTSDKKITKTNLPLEFSQVAATTNGSWDKAGYNTTIVEKDTERPVVNVPSEITVYRGESFEYFATVTDNSNAFDLAKTVVRWLYNNQPGRGTEWLQYSVTQVGNQLKVRIFGNVPIDTTIGDYTRYVVATDAAGNVNATQTEMGNAAVDKTSVNGQFKLIIRFRIKTPENTVFVNNPNQLTEVEKNLVREAVKKSNPDLRAQDVLNSNYVTGITVSNNGTTTITYRDGRKDIIDGSKFIDTRAGSISKSQSTSNSISVSLSKSESASASLVTSKLNSISSSASVSASTSISTSGSVSASESASTSSSVSASESASTSASVSASESASTSASVSASTSASTSASVSASTSASTSASTSASKSASTSASVSASTSASTSASVSASESASTSASVSASTSASTSASVSASTSASTSASVSASESASTSASVSASTSASTSASVSASESASTSASVSASTSASTSASVSASASASTSASVSASTSASTSASVSASASASTSASVSASTSASTSASVSASESASTSASVSASESASTSASVSASESASTSASVSASESASTSASVSASTSASTSASVSASESASTSASVSASESASTSASVSASESASTSASVSASESASTSASVSASTSASTSASVSASTSASTSASVSASTSASTSASVSASTSASTSASVSASESASTSASVSASESASTSASVSASTSASTSASVSASESASTSASVSASESASTSASESASESASTSASVSASESASTSASVSASESSSTSASVSASESSSTSASVSASESASTSASVSASESASTSASESASESASTSASVSASESASTSASVSASESASTSASVSASESVSTSASVSASESASTSASVSASESASTSASESASESASTSASVSASESASTSASVSASESASTSASVSASTSASTSASVSASESASTSASVSASESASTSASVSASESASTSASVSASESVSTSASVSASESASTSASVSASESASTSASESASESASTSASVSASESASTSASVSASESASTSASVSASTSASTSASVSASESASTSASVSASESASTSASVSASESASTSASVSASTSASTSASVSASESASTSTSVSTSTSASTSASVSASESASTSASVSASESASTSASVSASTSASTSASVSASESASTSASVSASESASTSASVSASESASTSASVSASESASTSASVSASTSASTSASVSASESASTSASVSASESASTSASVSASESASTSASVSASESASTSASVSASESASTSASVSASESASTSASVSASESASTSASVSASESASTSASVSASESASTSASVSASESASTSASVSASESASTSASVSASESASTSASVSASESASTSASVSASESASTSASVSASESASTSASVSASESASTSASVSASESASTSASVSASESASTSASVSASESASTSASVSASESASTSASVSASESASTSASVSASESASTSASVSASESASTSASVSASESASTSASVSASESASTSASVSASTSTSTSASVSASESASTSASVSASESASTSASVSASESASTSASVSASESASTSASVSASESASTSASVSASESASTSASVSASESASTSASVSASESASTSASVSASESASTSASVSASTSASTSASVSASESASTSASVSASESASTSASVSASESASTSASVSASESASTSASVSASESASTSASVSASESASTSASVSASESASTSASVSASESASTSASVSASKSASTSESASTSASVSASESASTSASVSASESASTSASVSASESVSTSASVSASDSASISASVLASESASTSASVSASESASTSASVSASESASTSASVSASESASTSSSVSASESASTSASVSASESASTSASVSASTSASTSASVSASESASTSASVSASESASTSASVSASESASTSASVSASESASTSASVSASESASTSASVSASESASTSASVSASESASTSASVSASTSASTSASVSASESASTSASVSSSESASTSASVSASESASTSASVSASESASTSASVSASESASTSASVSASESASTSASVSASTSASTSASVSASESASTSASVSASESASTSASVSASESASTSASVSASESASTSASVSASTSASTSASVSASESASTSASVSASESASTSASVSASTSASTSASVSASESASTSASVSASESASTSASVSASESASTSASVSASESASTSASVSASESASTSASVSASESASTSASVSASESASTSASVSASMSASTSASVSVSESTSTSASVSANESASTSASVSASESASTSASVSASESASTSASVSASESASTSASVSASESASTSASVSASESASTSASVSASESASTSASVSASESASTSASVSASESASTSASVSASESASTSASVSASTSASTSASVSANESASTSASVSASESASTSASVSASESASTSASVSASESASTSASVSASESASTSASVSASTSASTSASVSANESASTSASVSASESASTSASVSASESASTSASVSASESASTSASVSASESASTSASVSASTSASTSASVSASESASTSASASASESASTSASVSASESASTSASVSASESASTSASVSASESASTNASVSVSESMSVSESLSLSISTSVLHSQLNDIYESELYSLSLSESLSASQSLSQSLSESQSSSASQSMHDRISKGQLPRTGESENKASILALGLGALGLAFKKRKKNESED.

An N-terminal signal peptide occupies residues 1–85; the sequence is MFFKRQKGQY…AVLGGAVVTS (85 aa). Disordered regions lie at residues 117 to 147, 182 to 254, 876 to 909, 936 to 969, 1024 to 2085, 2106 to 2139, 2173 to 2223, 2250 to 2595, 2625 to 2965, and 3014 to 3045; these read EAATTLSSTEANPVESLSDTLSASESTSASS, SESL…APNV, SASTSASVSASESASTSASVSASESASTSASVSA, SASV…SVSA, VSAS…SVSA, SAST…SVSA, TSAS…NASV, and SQSLSESQSSSASQSMHDRISKGQLPRTGESE. Positions 118–127 are enriched in polar residues; it reads AATTLSSTEA. Residues 123 to 236 are ser-rich region 1 (SSR1); sequence SSTEANPVES…SSQQSTEASS (114 aa). Low complexity-rich tracts occupy residues 131–147 and 182–238; these read ESLSDTLSASESTSASS and SESL…SSQT. The tract at residues 237-603 is basic region (BR); that stretch reads QTGRRRTRRA…GSKFIDTRAG (367 aa). The segment at 604-3028 is ser-rich region 2 (SSR2); it reads SISKSQSTSN…ESQSSSASQS (2425 aa). Positions 3014 to 3028 are enriched in low complexity; that stretch reads SQSLSESQSSSASQS. The LPXTG sorting signal signature appears at 3038–3042; it reads LPRTG. Threonine 3041 carries the pentaglycyl murein peptidoglycan amidated threonine modification. A propeptide spans 3042–3072 (removed by sortase); the sequence is GESENKASILALGLGALGLAFKKRKKNESED.

Belongs to the serine-rich repeat protein (SRRP) family. Both SSR domains in the unglycosylated protein bind to Asp2 and Asp3; glycosylated protein binds less well. Interacts with the human cell surface glycoprotein GP1BA. Post-translationally, proteolytically cleaved by a metalloprotease. Both SSR1 and SSR2 domains are glycosylated. A truncated derivative (residues 1-2062) contains 105 nmol per nmol of protein, suggesting at least 10% of the apparent molecular weight is due to carbohydrates. Glucose and N-acetylglucosamine are present in a ratio of 30:73 residues per truncated polypeptide, as well as minor amounts of galactose and N-acetylgalactosamine. Glycosylation occurs intracellularly in the Ser-rich regions SSR1 and SSR2. Glycosylation of SSR2 domain may be required to prevent aggregation of GspB. It is probable that most of the Ser residues in SSR1 and SSR2 are O-GlcNAcylated. Sequential glycosylation by sugar transferases are able to generate complex sugar polymorphisms.

Its subcellular location is the secreted. It is found in the cell wall. Functionally, plays a role in virulence and host-pathogen interactions. Mediates binding to human platelets via interaction with the human cell surface glycoprotein GP1BA. Plays a positive role in biofilm formation, possibly by self-association via the basic region (BR). The protein is Platelet binding protein GspB (gspB) of Streptococcus gordonii.